We begin with the raw amino-acid sequence, 90 residues long: Small ribosomal subunit protein uS15c (90 aa).

Belongs to the universal ribosomal protein uS15 family. As to quaternary structure, part of the 30S ribosomal subunit.

It localises to the plastid. The protein resides in the chloroplast. This Secale cereale (Rye) protein is Small ribosomal subunit protein uS15c (rps15).